Here is a 409-residue protein sequence, read N- to C-terminus: Cobalt-precorrin-5B C(1)-methyltransferase (409 aa).

It belongs to the CbiD family.

It carries out the reaction Co-precorrin-5B + S-adenosyl-L-methionine = Co-precorrin-6A + S-adenosyl-L-homocysteine. The protein operates within cofactor biosynthesis; adenosylcobalamin biosynthesis; cob(II)yrinate a,c-diamide from sirohydrochlorin (anaerobic route): step 6/10. Catalyzes the methylation of C-1 in cobalt-precorrin-5B to form cobalt-precorrin-6A. The chain is Cobalt-precorrin-5B C(1)-methyltransferase from Methanopyrus kandleri (strain AV19 / DSM 6324 / JCM 9639 / NBRC 100938).